Reading from the N-terminus, the 102-residue chain is Large ribosomal subunit protein bL21 (102 aa).

It belongs to the bacterial ribosomal protein bL21 family. In terms of assembly, part of the 50S ribosomal subunit. Contacts protein L20.

In terms of biological role, this protein binds to 23S rRNA in the presence of protein L20. The protein is Large ribosomal subunit protein bL21 of Lactiplantibacillus plantarum (strain ATCC BAA-793 / NCIMB 8826 / WCFS1) (Lactobacillus plantarum).